The sequence spans 215 residues: Adenylate kinase (215 aa).

Residue 10–15 coordinates ATP; the sequence is GAGKGT. The segment at 30–59 is NMP; the sequence is STGDMLRAAVKAGSPLGQQVKGVMDSGGLV. AMP contacts are provided by residues threonine 31, arginine 36, 57–59, 85–88, and glutamine 92; these read GLV and GFPR. Residues 122-159 are LID; it reads GRRVHPASGRVYHTEHNPPKVAGKDDVTGEELIQREDD. Residues arginine 123 and 132-133 each bind ATP; that span reads VY. Arginine 156 and arginine 167 together coordinate AMP. Residue glycine 201 coordinates ATP.

This sequence belongs to the adenylate kinase family. As to quaternary structure, monomer.

Its subcellular location is the cytoplasm. It catalyses the reaction AMP + ATP = 2 ADP. It participates in purine metabolism; AMP biosynthesis via salvage pathway; AMP from ADP: step 1/1. Catalyzes the reversible transfer of the terminal phosphate group between ATP and AMP. Plays an important role in cellular energy homeostasis and in adenine nucleotide metabolism. This Pseudomonas aeruginosa (strain LESB58) protein is Adenylate kinase.